The sequence spans 916 residues: Nonsense-mediated mRNA decay factor SMG8 (916 aa).

The tract at residues 566 to 626 is disordered; the sequence is LENSNRTPDT…KNYASQGDAD (61 aa). Over residues 589–604 the composition is skewed to polar residues; sequence LSGSQKSQDSASNLTF.

It belongs to the SMG8 family.

In terms of biological role, involved in nonsense-mediated decay (NMD) of mRNAs containing premature stop codons. Probable component of kinase complex containing SMG1 and recruited to stalled ribosomes. This Aedes aegypti (Yellowfever mosquito) protein is Nonsense-mediated mRNA decay factor SMG8.